The sequence spans 169 residues: S-ribosylhomocysteine lyase (169 aa).

Positions 54, 58, and 128 each coordinate Fe cation.

The protein belongs to the LuxS family. Homodimer. Fe cation serves as cofactor.

The catalysed reaction is S-(5-deoxy-D-ribos-5-yl)-L-homocysteine = (S)-4,5-dihydroxypentane-2,3-dione + L-homocysteine. In terms of biological role, involved in the synthesis of autoinducer 2 (AI-2) which is secreted by bacteria and is used to communicate both the cell density and the metabolic potential of the environment. The regulation of gene expression in response to changes in cell density is called quorum sensing. Catalyzes the transformation of S-ribosylhomocysteine (RHC) to homocysteine (HC) and 4,5-dihydroxy-2,3-pentadione (DPD). The sequence is that of S-ribosylhomocysteine lyase from Shewanella sp. (strain MR-4).